Here is a 56-residue protein sequence, read N- to C-terminus: Large ribosomal subunit protein bL33 (56 aa).

Residues 1–12 (MASKGGRDKIKL) show a composition bias toward basic and acidic residues. Positions 1–30 (MASKGGRDKIKLESTAGTGHFYTTTKNKRT) are disordered. Residues 15-25 (TAGTGHFYTTT) show a composition bias toward polar residues.

Belongs to the bacterial ribosomal protein bL33 family.

The sequence is that of Large ribosomal subunit protein bL33 from Ralstonia nicotianae (strain ATCC BAA-1114 / GMI1000) (Ralstonia solanacearum).